The primary structure comprises 308 residues: MINNVNQEILRAFVENNRPLAHDGRLPTYIPALMNANKQDFGIHITELDGNSHYYGSFQIPFTVQSISKIITLAMAIMDNGEELVFSRVGMEPTEDKFNSILPLEMSSAYPPNPMINAGAIVVTSLIKGRTAGEQFERILDFTRALADNKNIQVDENAFLSERETGNMNRSLAYYLKDANVINGNVEEILETYFRHCSILVTAEDLSRIAYIFANDGKDIEGKQLIPAKVCKIVRAIMAMSGFYDESGEFAVRVGIPAKSGVGGGIIGVVPGYMGIGLYGPALNNKGTSIVGFNVLEELTSYLQVGIY.

Substrate-binding residues include Ser-66, Asn-117, Glu-162, Asn-169, Tyr-193, Tyr-244, and Val-262.

It belongs to the glutaminase family. In terms of assembly, homotetramer.

It catalyses the reaction L-glutamine + H2O = L-glutamate + NH4(+). This is Glutaminase from Natranaerobius thermophilus (strain ATCC BAA-1301 / DSM 18059 / JW/NM-WN-LF).